Reading from the N-terminus, the 618-residue chain is Sodium/iodide cotransporter (618 aa).

Over 1–14 (MEGAEAGARATFGP) the chain is Extracellular. The helical transmembrane segment at 15 to 31 (WDYGVFATMLLVSTGIG) threads the bilayer. The Cytoplasmic portion of the chain corresponds to 32–56 (LWVGLARGGQRSADDFFTGGRQLAA). The discontinuously helical transmembrane segment at 57–80 (VPVGLSLAASFMSAVQVLGVPAEA) threads the bilayer. Na(+) is bound by residues Ser-69, Val-71, and Gln-72. Val-76 lines the iodide pocket. At 81–84 (ARYG) the chain is on the extracellular side. Residues 85-105 (LKFLWMCVGQLLNSLLTALLF) traverse the membrane as a helical segment. Met-90 is an iodide binding site. Over 106-130 (LPIFYRLGLTSTYQYLELRFSRAVR) the chain is Cytoplasmic. Residues 131-157 (LCGTLQYLVATMLYTGIVIYAPALILN) form a helical membrane-spanning segment. Tyr-144 lines the Na(+) pocket. Residues 158 to 163 (QVTGLD) lie on the Extracellular side of the membrane. Residues 164–181 (IWASLLSTGIICTLYTTV) form a helical membrane-spanning segment. Residues 182-189 (GGMKAVVW) are Cytoplasmic-facing. Residues 190-208 (TDVFQVVVMLVGFWVILAR) traverse the membrane as a helical segment. At 209–243 (GVMLMGGPWNVLSLAQNHSRINLMDFDPDPRSRYT) the chain is on the extracellular side. A discontinuously helical membrane pass occupies residues 244–266 (FWTFVVGGSLVWLSMYGVNQAQV). Trp-255 contacts iodide. Residue Met-258 coordinates Na(+). Residues 267 to 278 (QRYVACHTERKA) lie on the Cytoplasmic side of the membrane. Residues 279-301 (KLALLVNQLGLFLIVASAACCGI) form a helical membrane-spanning segment. Residues 302–335 (VMFVYYKDCDPLLTGRIAAPDQYMPLLVLDIFED) lie on the Extracellular side of the membrane. Residues 336–363 (LPGVPGLFLACAYSGTLSTASTSINAMA) traverse the membrane as a helical segment. Residues 364-386 (AVTVEDLIKPRMPSLAPRKLVFI) lie on the Cytoplasmic side of the membrane. A helical membrane pass occupies residues 387 to 408 (SKGLSFIYGSTCLTVAALSSLL). Topologically, residues 409-411 (GGG) are extracellular. A helical membrane pass occupies residues 412–437 (VLQGSFTVMGVISGPLLGAFTLGMLL). Leu-413 provides a ligand contact to iodide. Na(+) is bound by residues Ser-416 and Phe-417. Phe-417 is a binding site for iodide. At 438–441 (PACN) the chain is on the cytoplasmic side. Residues 442-465 (TPGVLSGLTAGLAVSLWVAVGATL) form a helical membrane-spanning segment. The Extracellular segment spans residues 466–520 (YPPGEQTMGVLPTSAAGCTNASVLPSPPGAANTSRGIPSSGMDSGRPAFADTFYA). N-linked (GlcNAc...) asparagine glycosylation is found at Asn-485 and Asn-497. Residues 521–545 (VSYLYYGALGTLTTMLCGALISYLT) traverse the membrane as a helical segment. The Cytoplasmic segment spans residues 546-618 (GPTKRSSLGP…YLGHDVETNL (73 aa)). Ser-551 carries the post-translational modification Phosphoserine; by PKA. Basic and acidic residues predominate over residues 571-587 (PKEDTTTLEDSLVKGPE). The segment at 571–618 (PKEDTTTLEDSLVKGPEDIPAATKKPPGFRPEAETHPLYLGHDVETNL) is disordered.

The protein belongs to the sodium:solute symporter (SSF) (TC 2.A.21) family. As to quaternary structure, monomer. Glycosylated.

The protein resides in the cell membrane. It localises to the cytoplasm. The enzyme catalyses iodide(out) + 2 Na(+)(out) = iodide(in) + 2 Na(+)(in). The catalysed reaction is chlorate(out) + 2 Na(+)(out) = chlorate(in) + 2 Na(+)(in). It catalyses the reaction thiocyanate(out) + 2 Na(+)(out) = thiocyanate(in) + 2 Na(+)(in). It carries out the reaction nitrate(out) + 2 Na(+)(out) = nitrate(in) + 2 Na(+)(in). The enzyme catalyses selenocyanate(out) + 2 Na(+)(out) = selenocyanate(in) + 2 Na(+)(in). Its activity is regulated as follows. Perchlorate inhibits iodide transport activity. Oxyanions inhibit iodide transport activity by blocking the binding sites for iodide and one of the sodium ions. In terms of biological role, sodium:iodide symporter that mediates the transport of iodide into the thyroid gland. Can also mediate the transport of chlorate, thiocynate, nitrate and selenocynate. In Mus musculus (Mouse), this protein is Sodium/iodide cotransporter (Slc5a5).